The sequence spans 231 residues: Flagellar L-ring protein (231 aa).

The first 18 residues, 1–18 (MNRLLSVFALGGAVLLAG), serve as a signal peptide directing secretion. A lipid anchor (N-palmitoyl cysteine) is attached at cysteine 19. The S-diacylglycerol cysteine moiety is linked to residue cysteine 19.

The protein belongs to the FlgH family. As to quaternary structure, the basal body constitutes a major portion of the flagellar organelle and consists of four rings (L,P,S, and M) mounted on a central rod.

It localises to the cell outer membrane. The protein resides in the bacterial flagellum basal body. Assembles around the rod to form the L-ring and probably protects the motor/basal body from shearing forces during rotation. The protein is Flagellar L-ring protein of Pseudomonas putida (strain ATCC 700007 / DSM 6899 / JCM 31910 / BCRC 17059 / LMG 24140 / F1).